Reading from the N-terminus, the 350-residue chain is Phenylalanine--tRNA ligase alpha subunit (350 aa).

E262 serves as a coordination point for Mg(2+).

It belongs to the class-II aminoacyl-tRNA synthetase family. Phe-tRNA synthetase alpha subunit type 1 subfamily. In terms of assembly, tetramer of two alpha and two beta subunits. Requires Mg(2+) as cofactor.

It localises to the cytoplasm. It catalyses the reaction tRNA(Phe) + L-phenylalanine + ATP = L-phenylalanyl-tRNA(Phe) + AMP + diphosphate + H(+). The chain is Phenylalanine--tRNA ligase alpha subunit (pheS) from Thermus thermophilus (strain ATCC 27634 / DSM 579 / HB8).